The chain runs to 312 residues: Malate dehydrogenase 1 (312 aa).

NAD(+)-binding positions include glycine 11–glycine 16 and aspartate 35. Residues arginine 86 and arginine 92 each coordinate substrate. Residues asparagine 99 and isoleucine 122 to asparagine 124 each bind NAD(+). Positions 124 and 155 each coordinate substrate. Residue histidine 179 is the Proton acceptor of the active site.

Belongs to the LDH/MDH superfamily. MDH type 3 family.

It carries out the reaction (S)-malate + NAD(+) = oxaloacetate + NADH + H(+). Catalyzes the reversible oxidation of malate to oxaloacetate. The chain is Malate dehydrogenase 1 from Anaeromyxobacter dehalogenans (strain 2CP-C).